Here is a 488-residue protein sequence, read N- to C-terminus: GTPase Der (488 aa).

2 EngA-type G domains span residues 3–166 and 199–372; these read PVVA…AEAM and IKLA…DSAT. GTP-binding positions include 9–16, 56–60, 118–121, 205–212, 252–256, and 317–320; these read GRPNVGKS, DTGGI, NKVD, GKPNVGKS, DTAGV, and NKWD. The KH-like domain occupies 373-457; the sequence is RRVSTSMLTR…PIQLRFQEGD (85 aa). Residues 460–488 form a disordered region; that stretch reads FENKTEKLTMSQERRRKRAQSHIKDRKTK. Basic residues predominate over residues 473–488; it reads RRRKRAQSHIKDRKTK.

This sequence belongs to the TRAFAC class TrmE-Era-EngA-EngB-Septin-like GTPase superfamily. EngA (Der) GTPase family. Associates with the 50S ribosomal subunit.

GTPase that plays an essential role in the late steps of ribosome biogenesis. This Shewanella baltica (strain OS223) protein is GTPase Der.